The chain runs to 364 residues: Methylthioribose-1-phosphate isomerase (364 aa).

Asp254 acts as the Proton donor in catalysis.

It belongs to the eIF-2B alpha/beta/delta subunits family. MtnA subfamily.

The protein resides in the cytoplasm. It is found in the nucleus. It catalyses the reaction 5-(methylsulfanyl)-alpha-D-ribose 1-phosphate = 5-(methylsulfanyl)-D-ribulose 1-phosphate. Its pathway is amino-acid biosynthesis; L-methionine biosynthesis via salvage pathway; L-methionine from S-methyl-5-thio-alpha-D-ribose 1-phosphate: step 1/6. Catalyzes the interconversion of methylthioribose-1-phosphate (MTR-1-P) into methylthioribulose-1-phosphate (MTRu-1-P). This is Methylthioribose-1-phosphate isomerase from Drosophila sechellia (Fruit fly).